The primary structure comprises 117 residues: Iron-sulfur cluster insertion protein ErpA (117 aa).

Iron-sulfur cluster contacts are provided by Cys45, Cys109, and Cys111.

This sequence belongs to the HesB/IscA family. As to quaternary structure, homodimer. Iron-sulfur cluster serves as cofactor.

In terms of biological role, required for insertion of 4Fe-4S clusters for at least IspG. This chain is Iron-sulfur cluster insertion protein ErpA, found in Saccharophagus degradans (strain 2-40 / ATCC 43961 / DSM 17024).